The primary structure comprises 261 residues: Cytochrome c oxidase subunit 3 (261 aa).

Residues 1–15 are Mitochondrial matrix-facing; it reads MTHQTHAYHMVDPSP. The helical transmembrane segment at 16 to 34 threads the bilayer; that stretch reads WPLTGALSALLMTSGLTMW. Residues 35–40 lie on the Mitochondrial intermembrane side of the membrane; that stretch reads FHYHSV. The chain crosses the membrane as a helical span at residues 41 to 66; the sequence is TLLLLGLTTNILTMFQWWRDVVREGT. The Mitochondrial matrix segment spans residues 67–72; that stretch reads FQGHHT. The helical transmembrane segment at 73–105 threads the bilayer; the sequence is PVVQESLRYGMILFITSEVLFFTGFFWAFYHSS. Topologically, residues 106 to 128 are mitochondrial intermembrane; that stretch reads LAPTPELGSYWPPVGVYPLNPLE. The chain crosses the membrane as a helical span at residues 129–152; the sequence is VPLLNTSVLLASGVTITWAHHSLM. At 153-155 the chain is on the mitochondrial matrix side; sequence EGN. Residues 156–183 form a helical membrane-spanning segment; it reads RKNMLQALLITILLGVYFTLLQMFEYYE. The Mitochondrial intermembrane portion of the chain corresponds to 184–190; that stretch reads ASFTISD. Residues 191–223 traverse the membrane as a helical segment; it reads GIYGSTFFVTTGFHGLHVIIGSTFLLTCFIRQL. The Mitochondrial matrix portion of the chain corresponds to 224-232; that stretch reads KFHFTSNHH. The helical transmembrane segment at 233–256 threads the bilayer; sequence FGFEAAAWYWHFVDVVWLFLYLSI. Topologically, residues 257 to 261 are mitochondrial intermembrane; sequence YWWGS.

This sequence belongs to the cytochrome c oxidase subunit 3 family. Component of the cytochrome c oxidase (complex IV, CIV), a multisubunit enzyme composed of 14 subunits. The complex is composed of a catalytic core of 3 subunits MT-CO1, MT-CO2 and MT-CO3, encoded in the mitochondrial DNA, and 11 supernumerary subunits COX4I, COX5A, COX5B, COX6A, COX6B, COX6C, COX7A, COX7B, COX7C, COX8 and NDUFA4, which are encoded in the nuclear genome. The complex exists as a monomer or a dimer and forms supercomplexes (SCs) in the inner mitochondrial membrane with NADH-ubiquinone oxidoreductase (complex I, CI) and ubiquinol-cytochrome c oxidoreductase (cytochrome b-c1 complex, complex III, CIII), resulting in different assemblies (supercomplex SCI(1)III(2)IV(1) and megacomplex MCI(2)III(2)IV(2)).

Its subcellular location is the mitochondrion inner membrane. It catalyses the reaction 4 Fe(II)-[cytochrome c] + O2 + 8 H(+)(in) = 4 Fe(III)-[cytochrome c] + 2 H2O + 4 H(+)(out). In terms of biological role, component of the cytochrome c oxidase, the last enzyme in the mitochondrial electron transport chain which drives oxidative phosphorylation. The respiratory chain contains 3 multisubunit complexes succinate dehydrogenase (complex II, CII), ubiquinol-cytochrome c oxidoreductase (cytochrome b-c1 complex, complex III, CIII) and cytochrome c oxidase (complex IV, CIV), that cooperate to transfer electrons derived from NADH and succinate to molecular oxygen, creating an electrochemical gradient over the inner membrane that drives transmembrane transport and the ATP synthase. Cytochrome c oxidase is the component of the respiratory chain that catalyzes the reduction of oxygen to water. Electrons originating from reduced cytochrome c in the intermembrane space (IMS) are transferred via the dinuclear copper A center (CU(A)) of subunit 2 and heme A of subunit 1 to the active site in subunit 1, a binuclear center (BNC) formed by heme A3 and copper B (CU(B)). The BNC reduces molecular oxygen to 2 water molecules using 4 electrons from cytochrome c in the IMS and 4 protons from the mitochondrial matrix. This chain is Cytochrome c oxidase subunit 3 (MT-CO3), found in Loxodonta africana (African elephant).